The chain runs to 93 residues: ATP synthase subunit c (93 aa).

2 consecutive transmembrane segments (helical) span residues 13-33 (AIGV…GMGI) and 58-78 (ISLA…FILL).

It belongs to the ATPase C chain family. In terms of assembly, F-type ATPases have 2 components, F(1) - the catalytic core - and F(0) - the membrane proton channel. F(1) has five subunits: alpha(3), beta(3), gamma(1), delta(1), epsilon(1). F(0) has three main subunits: a(1), b(2) and c(10-14). The alpha and beta chains form an alternating ring which encloses part of the gamma chain. F(1) is attached to F(0) by a central stalk formed by the gamma and epsilon chains, while a peripheral stalk is formed by the delta and b chains.

Its subcellular location is the cell inner membrane. F(1)F(0) ATP synthase produces ATP from ADP in the presence of a proton or sodium gradient. F-type ATPases consist of two structural domains, F(1) containing the extramembraneous catalytic core and F(0) containing the membrane proton channel, linked together by a central stalk and a peripheral stalk. During catalysis, ATP synthesis in the catalytic domain of F(1) is coupled via a rotary mechanism of the central stalk subunits to proton translocation. Functionally, key component of the F(0) channel; it plays a direct role in translocation across the membrane. A homomeric c-ring of between 10-14 subunits forms the central stalk rotor element with the F(1) delta and epsilon subunits. This chain is ATP synthase subunit c, found in Campylobacter hominis (strain ATCC BAA-381 / DSM 21671 / CCUG 45161 / LMG 19568 / NCTC 13146 / CH001A).